The chain runs to 401 residues: Enolase (401 aa).

Residue Gln-154 coordinates (2R)-2-phosphoglycerate. Catalysis depends on Glu-197, which acts as the Proton donor. Mg(2+) is bound by residues Asp-233, Glu-274, and Asp-301. Residues Lys-326, Arg-355, Ser-356, and Lys-377 each contribute to the (2R)-2-phosphoglycerate site. Lys-326 functions as the Proton acceptor in the catalytic mechanism.

It belongs to the enolase family. Requires Mg(2+) as cofactor.

The protein resides in the cytoplasm. The protein localises to the secreted. It localises to the cell surface. The enzyme catalyses (2R)-2-phosphoglycerate = phosphoenolpyruvate + H2O. The protein operates within carbohydrate degradation; glycolysis; pyruvate from D-glyceraldehyde 3-phosphate: step 4/5. In terms of biological role, catalyzes the reversible conversion of 2-phosphoglycerate (2-PG) into phosphoenolpyruvate (PEP). It is essential for the degradation of carbohydrates via glycolysis. The chain is Enolase from Thermoplasma acidophilum (strain ATCC 25905 / DSM 1728 / JCM 9062 / NBRC 15155 / AMRC-C165).